The sequence spans 347 residues: Fructose-1,6-bisphosphatase class 1 (347 aa).

Residues Glu106, Asp128, Ile130, and Asp131 each coordinate Mg(2+). Substrate is bound by residues 131 to 134 (DGSS), Asn223, Tyr251, and Lys281. Glu287 contacts Mg(2+).

This sequence belongs to the FBPase class 1 family. In terms of assembly, homotetramer. Mg(2+) serves as cofactor.

Its subcellular location is the cytoplasm. The catalysed reaction is beta-D-fructose 1,6-bisphosphate + H2O = beta-D-fructose 6-phosphate + phosphate. Its pathway is carbohydrate biosynthesis; Calvin cycle. The protein is Fructose-1,6-bisphosphatase class 1 of Synechocystis sp. (strain ATCC 27184 / PCC 6803 / Kazusa).